Consider the following 485-residue polypeptide: Noelin (485 aa).

Positions 1–16 (MSVPLLKIGVVLSTMA) are cleaved as a signal peptide. N-linked (GlcNAc...) asparagine glycans are attached at residues Asn33, Asn103, Asn187, Asn288, Asn307, Asn394, Asn431, and Asn473. Residues 87-225 (RDARTKQLRQ…ERLRACMQKL (139 aa)) are a coiled coil. Residues 226–478 (ACGKLTGISD…QILYNVTLFH (253 aa)) enclose the Olfactomedin-like domain. A disulfide bridge connects residues Cys227 and Cys409.

Homotetramer; disulfide-linked. Dimer of dimers, giving rise to a V-shaped homotretramer. Isoform 1 and isoform 3 interact with RTN4R. Identified in a complex with RTN4R and LINGO1. Peripherally associated with AMPAR complex. AMPAR complex consists of an inner core made of 4 pore-forming GluA/GRIA proteins (GRIA1, GRIA2, GRIA3 and GRIA4) and 4 major auxiliary subunits arranged in a twofold symmetry. One of the two pairs of distinct binding sites is occupied either by CNIH2, CNIH3 or CACNG2, CACNG3. The other harbors CACNG2, CACNG3, CACNG4, CACNG8 or GSG1L. This inner core of AMPAR complex is complemented by outer core constituents binding directly to the GluA/GRIA proteins at sites distinct from the interaction sites of the inner core constituents. Outer core constituents include at least PRRT1, PRRT2, CKAMP44/SHISA9, FRRS1L and NRN1. The proteins of the inner and outer core serve as a platform for other, more peripherally associated AMPAR constituents, including OLFM1. Alone or in combination, these auxiliary subunits control the gating and pharmacology of the AMPAR complex and profoundly impact their biogenesis and protein processing. Interacts with OLFM2.

It localises to the secreted. It is found in the synapse. Its subcellular location is the endoplasmic reticulum. The protein resides in the cell projection. The protein localises to the axon. It localises to the perikaryon. In terms of biological role, contributes to the regulation of axonal growth in the embryonic and adult central nervous system by inhibiting interactions between RTN4R and LINGO1. Inhibits RTN4R-mediated axon growth cone collapse. May play an important role in regulating the production of neural crest cells by the neural tube. May be required for normal responses to olfactory stimuli. The protein is Noelin (OLFM1) of Homo sapiens (Human).